Here is a 176-residue protein sequence, read N- to C-terminus: MGPRVRVGVIVGVHGVRGAVRIKSFTEDPADIGFYSPVENEAGSIKYRLKVTGEVKGLVIATLDGIGDRDAAEALKGTELWVARERLPRLAEDEFLYSDLIGLVAEGVDGKRLGIVKAVADYGAGDVLDIKLEPKGDMMVPFTQASVPEVDIAGGRLVVVPPVYAPDENEEKSGGA.

One can recognise a PRC barrel domain in the interval 92-165 (EDEFLYSDLI…RLVVVPPVYA (74 aa)).

Belongs to the RimM family. As to quaternary structure, binds ribosomal protein uS19.

It is found in the cytoplasm. Functionally, an accessory protein needed during the final step in the assembly of 30S ribosomal subunit, possibly for assembly of the head region. Essential for efficient processing of 16S rRNA. May be needed both before and after RbfA during the maturation of 16S rRNA. It has affinity for free ribosomal 30S subunits but not for 70S ribosomes. The protein is Ribosome maturation factor RimM of Paramagnetospirillum magneticum (strain ATCC 700264 / AMB-1) (Magnetospirillum magneticum).